The following is a 172-amino-acid chain: Large ribosomal subunit protein uL10 (172 aa).

This sequence belongs to the universal ribosomal protein uL10 family. As to quaternary structure, part of the ribosomal stalk of the 50S ribosomal subunit. The N-terminus interacts with L11 and the large rRNA to form the base of the stalk. The C-terminus forms an elongated spine to which L12 dimers bind in a sequential fashion forming a multimeric L10(L12)X complex.

In terms of biological role, forms part of the ribosomal stalk, playing a central role in the interaction of the ribosome with GTP-bound translation factors. This chain is Large ribosomal subunit protein uL10, found in Brucella suis biovar 1 (strain 1330).